The following is a 440-amino-acid chain: ATP-dependent protease ATPase subunit HslU (440 aa).

Residues V18, 60 to 65 (GVGKTE), D253, E318, and R390 contribute to the ATP site.

Belongs to the ClpX chaperone family. HslU subfamily. As to quaternary structure, a double ring-shaped homohexamer of HslV is capped on each side by a ring-shaped HslU homohexamer. The assembly of the HslU/HslV complex is dependent on binding of ATP.

The protein localises to the cytoplasm. ATPase subunit of a proteasome-like degradation complex; this subunit has chaperone activity. The binding of ATP and its subsequent hydrolysis by HslU are essential for unfolding of protein substrates subsequently hydrolyzed by HslV. HslU recognizes the N-terminal part of its protein substrates and unfolds these before they are guided to HslV for hydrolysis. The sequence is that of ATP-dependent protease ATPase subunit HslU from Methylococcus capsulatus (strain ATCC 33009 / NCIMB 11132 / Bath).